The sequence spans 303 residues: UDP-3-O-acyl-N-acetylglucosamine deacetylase (303 aa).

Residues His78, His237, and Asp241 each coordinate Zn(2+). Catalysis depends on His264, which acts as the Proton donor.

The protein belongs to the LpxC family. Zn(2+) serves as cofactor.

The catalysed reaction is a UDP-3-O-[(3R)-3-hydroxyacyl]-N-acetyl-alpha-D-glucosamine + H2O = a UDP-3-O-[(3R)-3-hydroxyacyl]-alpha-D-glucosamine + acetate. The protein operates within glycolipid biosynthesis; lipid IV(A) biosynthesis; lipid IV(A) from (3R)-3-hydroxytetradecanoyl-[acyl-carrier-protein] and UDP-N-acetyl-alpha-D-glucosamine: step 2/6. Functionally, catalyzes the hydrolysis of UDP-3-O-myristoyl-N-acetylglucosamine to form UDP-3-O-myristoylglucosamine and acetate, the committed step in lipid A biosynthesis. In Chromohalobacter salexigens (strain ATCC BAA-138 / DSM 3043 / CIP 106854 / NCIMB 13768 / 1H11), this protein is UDP-3-O-acyl-N-acetylglucosamine deacetylase.